We begin with the raw amino-acid sequence, 271 residues long: MAAGPTTAEKSGASGAKRSSKGSSDGPSRPGTRNRKFRMPGTRALLITLGVLLLVAGGLWALYGSTWFRVERVKTSGTSVLTPREVEAAAAVPLGAPLVTVDTDAIEARIRKELPRVDSVDVVRSWPHGIGLKVTERKPVLLIEKGGKFIEVDATGMRFATVDTAPRNVPRLVLDSASSPSLRRFDADRLLQEAVGVRGELPAEIARDTRVVRITSYDSVTLELTRGRTVFWGSGEHGAVKARVLTALLKATPKAGHFDVSAPTAPASSGS.

The interval M1–F37 is disordered. The Cytoplasmic portion of the chain corresponds to M1–R43. Over residues A8–S24 the composition is skewed to low complexity. The helical transmembrane segment at A44–G64 threads the bilayer. At S65–S271 the chain is on the extracellular side. Positions F68–R137 constitute a POTRA domain.

It belongs to the FtsQ/DivIB family. FtsQ subfamily.

The protein localises to the cell membrane. Its function is as follows. Essential cell division protein. In Streptomyces venezuelae (strain ATCC 10712 / CBS 650.69 / DSM 40230 / JCM 4526 / NBRC 13096 / PD 04745), this protein is Cell division protein FtsQ.